A 458-amino-acid chain; its full sequence is NADH-quinone oxidoreductase subunit N (458 aa).

A run of 14 helical transmembrane segments spans residues leucine 2 to valine 22, isoleucine 30 to serine 50, glycine 62 to isoleucine 82, leucine 94 to serine 114, phenylalanine 118 to phenylalanine 138, phenylalanine 153 to phenylalanine 173, leucine 194 to valine 214, phenylalanine 235 to isoleucine 255, isoleucine 261 to alanine 281, leucine 290 to asparagine 310, leucine 318 to leucine 338, isoleucine 361 to phenylalanine 381, phenylalanine 397 to valine 417, and leucine 438 to phenylalanine 458.

This sequence belongs to the complex I subunit 2 family. NDH-1 is composed of 14 different subunits. Subunits NuoA, H, J, K, L, M, N constitute the membrane sector of the complex.

It is found in the cell inner membrane. The catalysed reaction is a quinone + NADH + 5 H(+)(in) = a quinol + NAD(+) + 4 H(+)(out). Its function is as follows. NDH-1 shuttles electrons from NADH, via FMN and iron-sulfur (Fe-S) centers, to quinones in the respiratory chain. The immediate electron acceptor for the enzyme in this species is believed to be ubiquinone. Couples the redox reaction to proton translocation (for every two electrons transferred, four hydrogen ions are translocated across the cytoplasmic membrane), and thus conserves the redox energy in a proton gradient. In Rickettsia conorii (strain ATCC VR-613 / Malish 7), this protein is NADH-quinone oxidoreductase subunit N.